Reading from the N-terminus, the 88-residue chain is ATP synthase subunit 9, mitochondrial (88 aa).

A run of 2 helical transmembrane segments spans residues 30-50 (IGLTGAGAGVGIVFAAFILAV) and 66-86 (LGFALSEAVGLLALMMSFLIL).

Belongs to the ATPase C chain family. In terms of assembly, F-type ATPases have 2 components, CF(1) - the catalytic core - and CF(0) - the membrane proton channel. CF(1) has five subunits: alpha(3), beta(3), gamma(1), delta(1), epsilon(1). CF(0) has three main subunits: a, b and c.

It localises to the mitochondrion membrane. Its function is as follows. Mitochondrial membrane ATP synthase (F(1)F(0) ATP synthase or Complex V) produces ATP from ADP in the presence of a proton gradient across the membrane which is generated by electron transport complexes of the respiratory chain. F-type ATPases consist of two structural domains, F(1) - containing the extramembraneous catalytic core and F(0) - containing the membrane proton channel, linked together by a central stalk and a peripheral stalk. During catalysis, ATP synthesis in the catalytic domain of F(1) is coupled via a rotary mechanism of the central stalk subunits to proton translocation. Part of the complex F(0) domain. A homomeric c-ring of probably 10 subunits is part of the complex rotary element. This is ATP synthase subunit 9, mitochondrial (atp9) from Dictyostelium citrinum (Slime mold).